A 190-amino-acid chain; its full sequence is Nucleoside triphosphate pyrophosphatase (190 aa).

The active-site Proton acceptor is Asp-69.

Belongs to the Maf family. Requires a divalent metal cation as cofactor.

It localises to the cytoplasm. It catalyses the reaction a ribonucleoside 5'-triphosphate + H2O = a ribonucleoside 5'-phosphate + diphosphate + H(+). The enzyme catalyses a 2'-deoxyribonucleoside 5'-triphosphate + H2O = a 2'-deoxyribonucleoside 5'-phosphate + diphosphate + H(+). Functionally, nucleoside triphosphate pyrophosphatase. May have a dual role in cell division arrest and in preventing the incorporation of modified nucleotides into cellular nucleic acids. The protein is Nucleoside triphosphate pyrophosphatase of Helicobacter pylori (strain ATCC 700392 / 26695) (Campylobacter pylori).